Reading from the N-terminus, the 272-residue chain is uncharacterized protein (272 aa).

The first 20 residues, 1-20 (MMEPKSIFLLGLLLFRVGKL), serve as a signal peptide directing secretion.

This is an uncharacterized protein from Caenorhabditis elegans.